The following is a 245-amino-acid chain: 1-(5-phosphoribosyl)-5-[(5-phosphoribosylamino)methylideneamino] imidazole-4-carboxamide isomerase (245 aa).

Asp-7 functions as the Proton acceptor in the catalytic mechanism. The active-site Proton donor is the Asp-129.

This sequence belongs to the HisA/HisF family.

The protein resides in the cytoplasm. The enzyme catalyses 1-(5-phospho-beta-D-ribosyl)-5-[(5-phospho-beta-D-ribosylamino)methylideneamino]imidazole-4-carboxamide = 5-[(5-phospho-1-deoxy-D-ribulos-1-ylimino)methylamino]-1-(5-phospho-beta-D-ribosyl)imidazole-4-carboxamide. It functions in the pathway amino-acid biosynthesis; L-histidine biosynthesis; L-histidine from 5-phospho-alpha-D-ribose 1-diphosphate: step 4/9. The chain is 1-(5-phosphoribosyl)-5-[(5-phosphoribosylamino)methylideneamino] imidazole-4-carboxamide isomerase from Erwinia tasmaniensis (strain DSM 17950 / CFBP 7177 / CIP 109463 / NCPPB 4357 / Et1/99).